A 363-amino-acid chain; its full sequence is NADH-quinone oxidoreductase subunit H (363 aa).

The next 10 helical transmembrane spans lie at 29–49 (VLKI…YVVW), 62–82 (GPMY…KLLF), 96–116 (FIIA…VVPF), 127–147 (VGLL…ILAG), 163–183 (AAQV…VMIA), 202–222 (FFDW…VSGV), 238–257 (EIVA…LFFL), 278–298 (WLSP…DWLW), 299–319 (KGGW…YIWF), and 339–359 (FIPL…YGVI).

This sequence belongs to the complex I subunit 1 family. In terms of assembly, NDH-1 is composed of 14 different subunits. Subunits NuoA, H, J, K, L, M, N constitute the membrane sector of the complex.

Its subcellular location is the cell inner membrane. The catalysed reaction is a quinone + NADH + 5 H(+)(in) = a quinol + NAD(+) + 4 H(+)(out). Its function is as follows. NDH-1 shuttles electrons from NADH, via FMN and iron-sulfur (Fe-S) centers, to quinones in the respiratory chain. The immediate electron acceptor for the enzyme in this species is believed to be ubiquinone. Couples the redox reaction to proton translocation (for every two electrons transferred, four hydrogen ions are translocated across the cytoplasmic membrane), and thus conserves the redox energy in a proton gradient. This subunit may bind ubiquinone. The protein is NADH-quinone oxidoreductase subunit H of Xanthomonas oryzae pv. oryzae (strain MAFF 311018).